The chain runs to 359 residues: Proton-gated ion channel (359 aa).

The signal sequence occupies residues 1–43 (MFPTGWRPKLSESIAASRMLWQPMAAVAVVQIGLLWFSPPVWG). At 44-235 (QDMVSPPPPI…LDYQLRISRQ (192 aa)) the chain is on the periplasmic side. The helical transmembrane segment at 236-258 (YFSYIPNIILPMLFILFISWTAF) threads the bilayer. The Cytoplasmic portion of the chain corresponds to 259–261 (WST). Residues 262–286 (SYEANVTLVVSTLIAHIAFNILVET) traverse the membrane as a helical segment. Topologically, residues 287–294 (NLPKTPYM) are periplasmic. A helical membrane pass occupies residues 295–323 (TYTGAIIFMIYLFYFVAVIEVTVQHYLKV). Residues 324-326 (ESQ) lie on the Cytoplasmic side of the membrane. The chain crosses the membrane as a helical span at residues 327–359 (PARAASITRASRIAFPVVFLLANIILAFLFFGF).

It belongs to the ligand-gated ion channel (TC 1.A.9) family. In terms of assembly, homopentamer.

The protein resides in the cell inner membrane. With respect to regulation, tetraethylammonium (TEA) and tetrabutylammonium (TBA) inhibit the proton-activated currents in a dose- and voltage-dependent manner in vitro, whereas the blocker of acid sensing ion channels, amiloride, has no effect. Channel current of GLIC can be inhibited by inhaled and intravenous general anesthetics at and below concentrations used clinically. Ion conduction is also inhibited by lidocaine and by divalent transition metal ions such as cadmium ions. In terms of biological role, cationic channel with similar permeabilities for Na(+) and K(+), that is activated by an increase of the proton concentration on the extracellular side. Displays no permeability for chloride ions. Shows slow kinetics of activation, no desensitization and a single channel conductance of 8 pS. Might contribute to adaptation to external pH change. The polypeptide is Proton-gated ion channel (glvI) (Gloeobacter violaceus (strain ATCC 29082 / PCC 7421)).